We begin with the raw amino-acid sequence, 117 residues long: Immunoglobulin heavy variable 1-45 (117 aa).

Positions 1-19 (MDWTWRILFLVAAVTDAYS) are cleaved as a signal peptide. Residues 20 to 44 (QMQLVQSGAEVKKTGSSVKVSCKAS) form a framework-1 region. In terms of domain architecture, Ig-like spans 20 to 117 (QMQLVQSGAE…EDTAMYYCAR (98 aa)). Cysteines 41 and 115 form a disulfide. The interval 45–52 (GYTFTYRY) is complementarity-determining-1. Residues 53 to 69 (LHWVRQAPGQALEWMGW) form a framework-2 region. A complementarity-determining-2 region spans residues 70-77 (ITPFNGNT). Residues 78–115 (NYAQKFQDRVTITRDRSMSTAYMELSSLRSEDTAMYYC) are framework-3. The tract at residues 116-117 (AR) is complementarity-determining-3.

As to quaternary structure, immunoglobulins are composed of two identical heavy chains and two identical light chains; disulfide-linked.

The protein resides in the secreted. It localises to the cell membrane. Functionally, v region of the variable domain of immunoglobulin heavy chains that participates in the antigen recognition. Immunoglobulins, also known as antibodies, are membrane-bound or secreted glycoproteins produced by B lymphocytes. In the recognition phase of humoral immunity, the membrane-bound immunoglobulins serve as receptors which, upon binding of a specific antigen, trigger the clonal expansion and differentiation of B lymphocytes into immunoglobulins-secreting plasma cells. Secreted immunoglobulins mediate the effector phase of humoral immunity, which results in the elimination of bound antigens. The antigen binding site is formed by the variable domain of one heavy chain, together with that of its associated light chain. Thus, each immunoglobulin has two antigen binding sites with remarkable affinity for a particular antigen. The variable domains are assembled by a process called V-(D)-J rearrangement and can then be subjected to somatic hypermutations which, after exposure to antigen and selection, allow affinity maturation for a particular antigen. This Homo sapiens (Human) protein is Immunoglobulin heavy variable 1-45.